The chain runs to 445 residues: Baccatin III:3-amino-3-phenylpropanoyltransferase (445 aa).

Belongs to the plant acyltransferase family.

It catalyses the reaction (3R)-3-amino-3-phenylpropanoyl-CoA + baccatin III = 3'-N-debenzoyl-2'-deoxytaxol + CoA. It participates in alkaloid biosynthesis; taxol biosynthesis. Its function is as follows. Acyltransferase involved in taxol biosynthesis. Catalyzes the selective 13-O-acylation of baccatin III with (3R)-3-amino-3-phenylpropanoyl-CoA as the acyl donor to form 3'-N-debenzoyl-2'-deoxytaxol. This is Baccatin III:3-amino-3-phenylpropanoyltransferase from Taxus cuspidata (Japanese yew).